The sequence spans 164 residues: Sec-independent protein translocase protein TatB (164 aa).

A helical membrane pass occupies residues 1–21 (MIDIGLSKMALIGAVALIVIG). The segment at 81-102 (ASEFQKDWESGTSDAAATGHDG) is disordered.

Belongs to the TatB family. As to quaternary structure, the Tat system comprises two distinct complexes: a TatABC complex, containing multiple copies of TatA, TatB and TatC subunits, and a separate TatA complex, containing only TatA subunits. Substrates initially bind to the TatABC complex, which probably triggers association of the separate TatA complex to form the active translocon.

It localises to the cell inner membrane. Functionally, part of the twin-arginine translocation (Tat) system that transports large folded proteins containing a characteristic twin-arginine motif in their signal peptide across membranes. Together with TatC, TatB is part of a receptor directly interacting with Tat signal peptides. TatB may form an oligomeric binding site that transiently accommodates folded Tat precursor proteins before their translocation. The protein is Sec-independent protein translocase protein TatB of Paracidovorax citrulli (strain AAC00-1) (Acidovorax citrulli).